A 122-amino-acid polypeptide reads, in one-letter code: Large ribosomal subunit protein bL12 (122 aa).

This sequence belongs to the bacterial ribosomal protein bL12 family. As to quaternary structure, homodimer. Part of the ribosomal stalk of the 50S ribosomal subunit. Forms a multimeric L10(L12)X complex, where L10 forms an elongated spine to which 2 to 4 L12 dimers bind in a sequential fashion. Binds GTP-bound translation factors.

Forms part of the ribosomal stalk which helps the ribosome interact with GTP-bound translation factors. Is thus essential for accurate translation. The chain is Large ribosomal subunit protein bL12 from Streptococcus mutans serotype c (strain ATCC 700610 / UA159).